A 25-amino-acid polypeptide reads, in one-letter code: Pregnancy-associated glycoprotein 59g (25 aa).

A glycan (N-linked (GlcNAc...) asparagine) is linked at asparagine 4.

This sequence belongs to the peptidase A1 family. In terms of tissue distribution, highly expressed in the placenta between day 60 and day 100 of gestation.

It localises to the secreted. The protein resides in the extracellular space. This Ovis aries (Sheep) protein is Pregnancy-associated glycoprotein 59g.